Reading from the N-terminus, the 156-residue chain is 6,7-dimethyl-8-ribityllumazine synthase (156 aa).

5-amino-6-(D-ribitylamino)uracil contacts are provided by residues phenylalanine 22, 57–59 (AYE), and 81–83 (TVI). 86 to 87 (GT) serves as a coordination point for (2S)-2-hydroxy-3-oxobutyl phosphate. Catalysis depends on histidine 89, which acts as the Proton donor. Residue phenylalanine 114 participates in 5-amino-6-(D-ribitylamino)uracil binding. Arginine 128 is a binding site for (2S)-2-hydroxy-3-oxobutyl phosphate.

The protein belongs to the DMRL synthase family. Forms an icosahedral capsid composed of 60 subunits, arranged as a dodecamer of pentamers.

It catalyses the reaction (2S)-2-hydroxy-3-oxobutyl phosphate + 5-amino-6-(D-ribitylamino)uracil = 6,7-dimethyl-8-(1-D-ribityl)lumazine + phosphate + 2 H2O + H(+). Its pathway is cofactor biosynthesis; riboflavin biosynthesis; riboflavin from 2-hydroxy-3-oxobutyl phosphate and 5-amino-6-(D-ribitylamino)uracil: step 1/2. Catalyzes the formation of 6,7-dimethyl-8-ribityllumazine by condensation of 5-amino-6-(D-ribitylamino)uracil with 3,4-dihydroxy-2-butanone 4-phosphate. This is the penultimate step in the biosynthesis of riboflavin. This chain is 6,7-dimethyl-8-ribityllumazine synthase, found in Proteus mirabilis (strain HI4320).